Consider the following 348-residue polypeptide: Dihydroorotase (348 aa).

Residues H14 and H16 each coordinate Zn(2+). Substrate is bound by residues 16–18 (HLR) and N42. Zn(2+) is bound by residues K100, H137, and H175. The residue at position 100 (K100) is an N6-carboxylysine. H137 serves as a coordination point for substrate. L220 provides a ligand contact to substrate. D248 lines the Zn(2+) pocket. The active site involves D248. Residues H252 and A264 each contribute to the substrate site.

Belongs to the metallo-dependent hydrolases superfamily. DHOase family. Class II DHOase subfamily. As to quaternary structure, homodimer. It depends on Zn(2+) as a cofactor.

It carries out the reaction (S)-dihydroorotate + H2O = N-carbamoyl-L-aspartate + H(+). It functions in the pathway pyrimidine metabolism; UMP biosynthesis via de novo pathway; (S)-dihydroorotate from bicarbonate: step 3/3. In terms of biological role, catalyzes the reversible cyclization of carbamoyl aspartate to dihydroorotate. This Pseudomonas aeruginosa (strain UCBPP-PA14) protein is Dihydroorotase.